The chain runs to 663 residues: DNA topoisomerase 4 subunit B (663 aa).

ATP-binding positions include Y7, N47, D74, 114 to 120 (GLHGVGA), and K341. A disordered region spans residues 386–416 (REAARKAREDARSGKKNKRKDTLLSGKLTPA). Positions 387–398 (EAARKAREDARS) are enriched in basic and acidic residues. The region spanning 424–538 (NELYLVEGDS…ADRVFIALPP (115 aa)) is the Toprim domain. The Mg(2+) site is built by E430, D503, and D505.

It belongs to the type II topoisomerase family. ParE type 2 subfamily. In terms of assembly, heterotetramer composed of ParC and ParE. It depends on Mg(2+) as a cofactor. Mn(2+) is required as a cofactor. Ca(2+) serves as cofactor.

The catalysed reaction is ATP-dependent breakage, passage and rejoining of double-stranded DNA.. Topoisomerase IV is essential for chromosome segregation. It relaxes supercoiled DNA. Performs the decatenation events required during the replication of a circular DNA molecule. This chain is DNA topoisomerase 4 subunit B, found in Staphylococcus aureus (strain MSSA476).